The sequence spans 1170 residues: Thrombospondin-2 (1170 aa).

The first 18 residues, 1-18 (MLWPLLLLALWAWPSAQA), serve as a signal peptide directing secretion. In terms of domain architecture, Laminin G-like spans 19 to 215 (GDQDEDTAFD…LQNVYLVFEN (197 aa)). A heparin-binding region spans residues 19 to 232 (GDQDEDTAFD…KKGCQQSQGA (214 aa)). N-linked (GlcNAc...) asparagine glycosylation is found at Asn151, Asn316, and Asn330. Residues 318 to 375 (SACWQDGRFFAENETWVVDSCTKCTCKKFKTVCHQISCPPATCADPWFVEGECCPSCV) form the VWFC domain. TSP type-1 domains lie at 379–429 (EEGW…GRCD), 435–490 (DGGW…PPCP), and 492–547 (DGRW…KSCP). Disulfide bonds link Cys391-Cys423, Cys395-Cys428, Cys406-Cys413, Cys447-Cys484, Cys451-Cys489, Cys462-Cys474, Cys504-Cys541, Cys508-Cys546, Cys519-Cys531, Cys551-Cys562, Cys556-Cys572, Cys575-Cys586, Cys592-Cys608, Cys599-Cys617, Cys620-Cys644, Cys650-Cys663, Cys657-Cys676, Cys678-Cys689, Cys705-Cys713, Cys718-Cys738, Cys754-Cys774, Cys777-Cys797, Cys813-Cys833, Cys836-Cys856, Cys874-Cys894, and Cys910-Cys930. A glycan (N-linked (GlcNAc...) asparagine) is linked at Asn455. The EGF-like 1 domain maps to 547–587 (PIDGCLSNPCFPGAECSSFPDGSWSCGSCPGGFLGNGTHCE). Asn582 carries an N-linked (GlcNAc...) asparagine glycan. The EGF-like 2 domain maps to 646–690 (PENPCKDKTHSCHRHAECIYLGHFSDPMYKCECQTGYAGDGLICG). TSP type-3 repeat units follow at residues 691–726 (EDSDLDGWPNKNLVCATNATYHCVKDNCPLLPNSGQ), 727–762 (EDFDKDGIGDACDDDDDNDGVSDEKDNCQLLFNPRQ), 763–785 (FDYDKDEVGDRCDNCPYVHNPAQ), 786–821 (IDTDNNGEGDACSVDIDGDDVFNERDNCPYVYNTDQ), 822–844 (RDTDGDGVGDHCDNCPLVHNPDQ), 845–882 (TDVDNDLVGDQCDNNEDIDEDGHQNNQDNCPHIPNANQ), 883–918 (ADHDRDGQGDACDSDDDNDGIPDDRDNCRLVANPDQ), and 919–954 (EDSDGDRRGDACKDDFDNDSIPDIDDVCPENNAISE). A glycan (N-linked (GlcNAc...) asparagine) is linked at Asn708. A disordered region spans residues 731–750 (KDGIGDACDDDDDNDGVSDE). Residues 737 to 747 (ACDDDDDNDGV) show a composition bias toward acidic residues. Positions 841–944 (NPDQTDVDND…DNDSIPDIDD (104 aa)) are disordered. 2 stretches are compositionally biased toward acidic residues: residues 845–864 (TDVDNDLVGDQCDNNEDIDE) and 894–903 (CDSDDDNDGI). Residues 923–933 (GDRRGDACKDD) show a composition bias toward basic and acidic residues. The short motif at 926–928 (RGD) is the Cell attachment site element. Over residues 934–944 (FDNDSIPDIDD) the composition is skewed to acidic residues. N-linked (GlcNAc...) asparagine glycosylation is found at Asn936 and Asn1067. A disulfide bridge connects residues Cys946 and Cys1167. The region spanning 958–1170 (RNFQMVHLDP…SDLKYECRDV (213 aa)) is the TSP C-terminal domain.

This sequence belongs to the thrombospondin family. Homotrimer; disulfide-linked. Can bind to fibrinogen, fibronectin, laminin and type V collagen. Interacts (via the TSP type I repeats) with CD36; the interaction conveys an antiangiogenic effect. Interacts (via the TSP type I repeats) with HRG; the interaction blocks the antiangiogenic effect of THBS2 with CD36.

Adhesive glycoprotein that mediates cell-to-cell and cell-to-matrix interactions. Ligand for CD36 mediating antiangiogenic properties. This chain is Thrombospondin-2 (THBS2), found in Bos taurus (Bovine).